Reading from the N-terminus, the 352-residue chain is Molybdenum import ATP-binding protein ModC (352 aa).

In terms of domain architecture, ABC transporter spans 1 to 229 (MLELNFSQTL…SVMNPWLPKE (229 aa)). Residue 31–38 (GVSGAGKT) participates in ATP binding. A Mop domain is found at 289-352 (QTSIRNVLRA…AQIKSVSITA (64 aa)).

This sequence belongs to the ABC transporter superfamily. Molybdate importer (TC 3.A.1.8) family. As to quaternary structure, the complex is composed of two ATP-binding proteins (ModC), two transmembrane proteins (ModB) and a solute-binding protein (ModA).

It localises to the cell inner membrane. It catalyses the reaction molybdate(out) + ATP + H2O = molybdate(in) + ADP + phosphate + H(+). Part of the ABC transporter complex ModABC involved in molybdenum import. Responsible for energy coupling to the transport system. This chain is Molybdenum import ATP-binding protein ModC, found in Shigella flexneri.